A 793-amino-acid chain; its full sequence is Short transient receptor potential channel 1 (793 aa).

The tract at residues 1–30 (MMAALYPSTDLSGASSSSLPSSPSSSSPNE) is disordered. Over 1 to 345 (MMAALYPSTD…FGQMSGYRRK (345 aa)) the chain is Cytoplasmic. The span at 15–28 (SSSSLPSSPSSSSP) shows a compositional bias: low complexity. ANK repeat units follow at residues 46–75 (LNEK…SGDL), 83–109 (LGRN…YGCQ), 111–156 (ADAL…EYST), and 158–180 (MDVA…MLLK). Positions 189, 193, 195, and 198 each coordinate Zn(2+). Positions 346–379 (PTCKKIMTVLTVGIFWPVLSLCYLIAPKSQFGRI) form an intramembrane region, discontinuously helical. The Cytoplasmic segment spans residues 380–386 (IHTPFMK). A helical membrane pass occupies residues 387–404 (FIIHGASYFTFLLLLNLY). Over 405–422 (SLVYHEDKKNTMGPALER) the chain is Extracellular. The helical transmembrane segment at 423–439 (IDYLLILWIIGMIWSDI) threads the bilayer. Topologically, residues 440-455 (KRLWYEGLEDFLEESR) are cytoplasmic. A helical membrane pass occupies residues 456-475 (NQLSFVMNSLYLATFALKEE). Over 476 to 496 (AHNKFHDFADRKDWDAFHPTL) the chain is Extracellular. The helical transmembrane segment at 497–517 (VAEGLFAFANVLSYLRLFFYV) threads the bilayer. Residues 518–536 (YTSSILGPLQISMGRMLQD) lie on the Cytoplasmic side of the membrane. The chain crosses the membrane as a helical span at residues 537–558 (FGKFLGMFLLVLFSFTIGLTQL). At 559 to 623 (YDKGYTPKEQ…GEELQSFVGA (65 aa)) the chain is on the extracellular side. The cysteines at positions 571 and 576 are disulfide-linked. The helical transmembrane segment at 624-644 (FIVGTYNVVVVIVLTKLLVAM) threads the bilayer. The Cytoplasmic segment spans residues 645 to 793 (LHKSFQLIAN…SKYAMFYPRN (149 aa)).

It belongs to the transient receptor (TC 1.A.4) family. STrpC subfamily. TRPC1 sub-subfamily. Heterotetramer with TRPC4 and/or TRPC5. Forms a heteromeric ion channel with TRPC4, with a 1:3 TRPC1:TRPC4 stoichiometry. Unlike other TRP channel proteins, does not form a homomeric channel. Interacts with TRPC4AP. Interacts with ITPR3. Interacts with MX1 and RNF24. Interacts with FKBP4. Interacts with PLSCR1. Interacts with PKD2L2. Forms a heterotetramer with PKD2 with a 2:2 stoichiometry; has distinct channel properties separate from PKD2 or TRPC1 homomers alone. In terms of processing, activation of PRKCA induces phosphorylation of TRPC1 and subsequent Ca2+ entry into cells.

It is found in the cell membrane. The catalysed reaction is Ca(2+)(in) = Ca(2+)(out). The enzyme catalyses Na(+)(in) = Na(+)(out). It catalyses the reaction Li(+)(in) = Li(+)(out). It carries out the reaction Cs(+)(in) = Cs(+)(out). With respect to regulation, may be operated by a phosphatidylinositol second messenger system activated by receptor tyrosine kinases or G-protein coupled receptors. Also activated by intracellular calcium store depletion. Functionally, forms a receptor-activated non-selective calcium permeant cation channel. Forms a heteromeric ion channel with TRPC4 or TRPC5 that has reduced calcium permeability compared to the homomeric TRPC4 or TRPC5 channel. Also permeable to monovalent ions including sodium, lithium and cesium ions. In Bos taurus (Bovine), this protein is Short transient receptor potential channel 1 (TRPC1).